Consider the following 95-residue polypeptide: Ferredoxin-4 (95 aa).

The 2Fe-2S ferredoxin-type domain maps to 2–95; the sequence is DKATLTFTDV…LGGAVKVRPA (94 aa). Positions 38, 43, 46, and 81 each coordinate [2Fe-2S] cluster.

The protein belongs to the 2Fe2S plant-type ferredoxin family. [2Fe-2S] cluster serves as cofactor.

Ferredoxins are iron-sulfur proteins that transfer electrons in a wide variety of metabolic reactions. This ferredoxin is required for nitrogen fixation. This is Ferredoxin-4 (fdxC) from Rhodobacter capsulatus (Rhodopseudomonas capsulata).